The chain runs to 933 residues: Progesterone receptor (933 aa).

Positions 1-48 (MTELKAKGPRAPHVAGGPPSPEVGSPLLCRPAAGPFEGSQTSDTLPEV) are disordered. The tract at residues 1–164 (MTELKAKGPR…PATQRVLSPL (164 aa)) is AF3; mediates transcriptional activation. Residues 1-566 (MTELKAKGPR…YSFESLPQKI (566 aa)) form a modulating, Pro-Rich region. Position 20 is a phosphoserine (S20). An LXXL motif 1 motif is present at residues 55–59 (LDGLL). Residues 66 to 255 (GQDLPDEKTQ…GAAAGGGAAA (190 aa)) are disordered. Phosphoserine is present on S81. Positions 115-119 (LDTLL) match the LXXL motif 2 motif. S130 and S162 each carry phosphoserine. Positions 165–305 (MSRSGGKTGD…LATTMMDFIH (141 aa)) are mediates transcriptional transrepression. Residues 183 to 187 (KVLPR) carry the Nuclear localization signal motif. 2 positions are modified to phosphoserine: S190 and S213. At S294 the chain carries Phosphoserine; by MAPK1. A disordered region spans residues 331–378 (GGAGAASAFAPPQSSPSASSTPVAVGDFPDCAYPPDAEPKDNAYPLYG). The span at 335-350 (AASAFAPPQSSPSASS) shows a compositional bias: low complexity. S345 is subject to Phosphoserine; by MAPK. K388 is covalently cross-linked (Glycyl lysine isopeptide (Lys-Gly) (interchain with G-Cter in SUMO); alternate). Residue K388 forms a Glycyl lysine isopeptide (Lys-Gly) (interchain with G-Cter in ubiquitin); alternate linkage. Position 400 is a phosphoserine; by CDK2 (S400). Positions 415–454 (PDYPLGPPPQLPPRAPPSRPGEAAVTAAPASASVSSASSP) are disordered. A compositionally biased stretch (pro residues) spans 418 to 433 (PLGPPPQLPPRAPPSR). Residues 437–454 (AAVTAAPASASVSSASSP) show a composition bias toward low complexity. An AF1; mediates transcriptional activation region spans residues 456–546 (STLECILYKA…VYPPYLNYLR (91 aa)). K531 is covalently cross-linked (Glycyl lysine isopeptide (Lys-Gly) (interchain with G-Cter in SUMO)). 2 consecutive NR C4-type zinc fingers follow at residues 567–587 (CLICGDEASGCHYGVLTCGSC) and 603–627 (CAGRNDCIVDKIRRKNCPACRLRKC). A DNA-binding region (nuclear receptor) is located at residues 567-639 (CLICGDEASG…AGMVLGGRKF (73 aa)). At S676 the chain carries Phosphoserine. An NR LBD domain is found at 679-913 (QDIQLIPPLI…EFPEMMSEVI (235 aa)). Residues 687-933 (LIKLLMSIEP…MVKPLLFHKK (247 aa)) are AF2; mediates transcriptional activation.

It belongs to the nuclear hormone receptor family. As to quaternary structure, interacts with SMARD1 and UNC45A. Interacts with CUEDC2; the interaction promotes ubiquitination, decreases sumoylation, and represses transcriptional activity. Interacts with PIAS3; the interaction promotes sumoylation of PR in a hormone-dependent manner, inhibits DNA-binding, and alters nuclear export. Interacts with SP1; the interaction requires ligand-induced phosphorylation on Ser-345 by ERK1/2-MAPK. Interacts with PRMT2. Interacts with NCOA2 and NCOA1. Interacts with KLF9. Interacts with GTF2B. Post-translationally, phosphorylated on multiple serine sites. Several of these sites are hormone-dependent. Phosphorylation on Ser-294 is highly hormone-dependent and modulates ubiquitination and sumoylation on Lys-388. Phosphorylation on Ser-345 also requires induction by hormone. Basal phosphorylation on Ser-81, Ser-162, Ser-190 and Ser-400 is increased in response to progesterone and can be phosphorylated in vitro by the CDK2-A1 complex. Increased levels of phosphorylation on Ser-400 also in the presence of EGF, heregulin, IGF, PMA and FBS. Phosphorylation at this site by CDK2 is ligand-independent, and increases nuclear translocation and transcriptional activity. Phosphorylation at Ser-162 and Ser-294, but not at Ser-190, is impaired during the G(2)/M phase of the cell cycle. Phosphorylation on Ser-345 by ERK1/2 MAPK is required for interaction with SP1. In terms of processing, sumoylation is hormone-dependent and represses transcriptional activity. Sumoylation on all three sites is enhanced by PIAS3. Desumoylated by SENP1. Sumoylation on Lys-388, the main site of sumoylation, is repressed by ubiquitination on the same site, and modulated by phosphorylation at Ser-294. Ubiquitination is hormone-dependent and represses sumoylation on the same site. Promoted by MAPK-mediated phosphorylation on Ser-294. Post-translationally, palmitoylated by ZDHHC7 and ZDHHC21. Palmitoylation is required for plasma membrane targeting and for rapid intracellular signaling via ERK and AKT kinases and cAMP generation.

Its subcellular location is the nucleus. The protein localises to the cytoplasm. In terms of biological role, the steroid hormones and their receptors are involved in the regulation of eukaryotic gene expression and affect cellular proliferation and differentiation in target tissues. Transcriptional activator of several progesteron-dependent promoters in a variety of cell types. Involved in activation of SRC-dependent MAPK signaling on hormone stimulation. In Trachypithecus obscurus (Dusky leaf-monkey), this protein is Progesterone receptor (PGR).